Here is a 768-residue protein sequence, read N- to C-terminus: WD repeat-containing protein 20 homolog (768 aa).

Residues 103 to 122 (ESPEAVAPTSSTYEHHKNEP) are disordered. WD repeat units follow at residues 224–264 (IEKT…ASSN), 302–342 (IGEG…LLAV), 345–384 (SYFG…VVCR), and 454–497 (CSLA…LNQG). The disordered stretch occupies residues 531 to 608 (VSPGGAGVNA…VNSESSKKQN (78 aa)). Over residues 539 to 553 (NASSDSQSITNNHTT) the composition is skewed to polar residues. Low complexity predominate over residues 570–582 (FSKFTSGSSSATS). The segment covering 595-608 (NGASVNSESSKKQN) has biased composition (polar residues). Residues 646 to 683 (VSHDRLTVLEFREDCVVTACQEGYICTWGRPGRYQPKR) form a WD 5 repeat. Residues 684 to 749 (DCINSPGTAS…PNITSPSYRV (66 aa)) are disordered. The segment covering 688 to 712 (SPGTASPESGQKPSGSTSAMTSSYG) has biased composition (polar residues). Residues 724-733 (SRSSSTYSNS) show a composition bias toward low complexity. Residues 734 to 749 (EQQLRSPNITSPSYRV) show a composition bias toward polar residues.

As to quaternary structure, interacts with usp-46; the interaction increases the catalytic activity of usp-46 in the presence of wdr-48. Expressed in several neurons in the head and tail.

In terms of biological role, together with wdr-48, binds to and stimulates the activity of the deubiquitinating enzyme usp-46, leading to deubiquitination and stabilization of the glr-1 glutamate receptor. The protein is WD repeat-containing protein 20 homolog of Caenorhabditis elegans.